The sequence spans 517 residues: Bifunctional purine biosynthesis protein PurH (517 aa).

The MGS-like domain occupies 1–145; the sequence is MSPLALVSVS…KNHKDVSVLV (145 aa).

This sequence belongs to the PurH family.

The catalysed reaction is (6R)-10-formyltetrahydrofolate + 5-amino-1-(5-phospho-beta-D-ribosyl)imidazole-4-carboxamide = 5-formamido-1-(5-phospho-D-ribosyl)imidazole-4-carboxamide + (6S)-5,6,7,8-tetrahydrofolate. The enzyme catalyses IMP + H2O = 5-formamido-1-(5-phospho-D-ribosyl)imidazole-4-carboxamide. The protein operates within purine metabolism; IMP biosynthesis via de novo pathway; 5-formamido-1-(5-phospho-D-ribosyl)imidazole-4-carboxamide from 5-amino-1-(5-phospho-D-ribosyl)imidazole-4-carboxamide (10-formyl THF route): step 1/1. It participates in purine metabolism; IMP biosynthesis via de novo pathway; IMP from 5-formamido-1-(5-phospho-D-ribosyl)imidazole-4-carboxamide: step 1/1. This chain is Bifunctional purine biosynthesis protein PurH, found in Prochlorococcus marinus (strain AS9601).